The following is a 219-amino-acid chain: 2-hydroxy-3-keto-5-methylthiopentenyl-1-phosphate phosphatase (219 aa).

It belongs to the HAD-like hydrolase superfamily. MtnX family.

The catalysed reaction is 2-hydroxy-5-methylsulfanyl-3-oxopent-1-enyl phosphate + H2O = 1,2-dihydroxy-5-(methylsulfanyl)pent-1-en-3-one + phosphate. Its pathway is amino-acid biosynthesis; L-methionine biosynthesis via salvage pathway; L-methionine from S-methyl-5-thio-alpha-D-ribose 1-phosphate: step 4/6. Functionally, dephosphorylates 2-hydroxy-3-keto-5-methylthiopentenyl-1-phosphate (HK-MTPenyl-1-P) yielding 1,2-dihydroxy-3-keto-5-methylthiopentene (DHK-MTPene). This chain is 2-hydroxy-3-keto-5-methylthiopentenyl-1-phosphate phosphatase, found in Bacillus anthracis (strain A0248).